A 92-amino-acid chain; its full sequence is Small ribosomal subunit protein uS19c (92 aa).

Belongs to the universal ribosomal protein uS19 family.

It is found in the plastid. It localises to the chloroplast. Protein S19 forms a complex with S13 that binds strongly to the 16S ribosomal RNA. This chain is Small ribosomal subunit protein uS19c, found in Manihot esculenta (Cassava).